Here is a 290-residue protein sequence, read N- to C-terminus: 4-diphosphocytidyl-2-C-methyl-D-erythritol kinase (290 aa).

Lys-10 is a catalytic residue. Residue 95 to 105 (PVAAGLAGGSS) participates in ATP binding. Asp-137 is an active-site residue.

It belongs to the GHMP kinase family. IspE subfamily.

The enzyme catalyses 4-CDP-2-C-methyl-D-erythritol + ATP = 4-CDP-2-C-methyl-D-erythritol 2-phosphate + ADP + H(+). It participates in isoprenoid biosynthesis; isopentenyl diphosphate biosynthesis via DXP pathway; isopentenyl diphosphate from 1-deoxy-D-xylulose 5-phosphate: step 3/6. Its function is as follows. Catalyzes the phosphorylation of the position 2 hydroxy group of 4-diphosphocytidyl-2C-methyl-D-erythritol. The sequence is that of 4-diphosphocytidyl-2-C-methyl-D-erythritol kinase from Geobacillus kaustophilus (strain HTA426).